An 840-amino-acid polypeptide reads, in one-letter code: Probable alpha-glucuronidase A (840 aa).

A signal peptide spans 1–19; it reads MWSGIPIFALLSSIGIAAA. Asn-50, Asn-149, Asn-222, Asn-262, Asn-279, Asn-310, Asn-465, Asn-527, Asn-576, Asn-610, Asn-682, Asn-723, and Asn-732 each carry an N-linked (GlcNAc...) asparagine glycan.

It belongs to the glycosyl hydrolase 67 family.

It localises to the secreted. It catalyses the reaction an alpha-D-glucuronoside + H2O = D-glucuronate + an alcohol. Alpha-glucuronidase involved in the hydrolysis of xylan, a major structural heterogeneous polysaccharide found in plant biomass representing the second most abundant polysaccharide in the biosphere, after cellulose. Releases 4-O-methylglucuronic acid from xylan. The chain is Probable alpha-glucuronidase A (aguA) from Aspergillus fumigatus (strain ATCC MYA-4609 / CBS 101355 / FGSC A1100 / Af293) (Neosartorya fumigata).